We begin with the raw amino-acid sequence, 215 residues long: Cytochrome c biogenesis ATP-binding export protein CcmA (215 aa).

Residues 8-215 enclose the ABC transporter domain; that stretch reads LQATALACER…RDLDLGQWSA (208 aa). 40–47 contacts ATP; that stretch reads GPNGCGKT.

Belongs to the ABC transporter superfamily. CcmA exporter (TC 3.A.1.107) family. The complex is composed of two ATP-binding proteins (CcmA) and two transmembrane proteins (CcmB).

The protein localises to the cell inner membrane. It catalyses the reaction heme b(in) + ATP + H2O = heme b(out) + ADP + phosphate + H(+). Its function is as follows. Part of the ABC transporter complex CcmAB involved in the biogenesis of c-type cytochromes; once thought to export heme, this seems not to be the case, but its exact role is uncertain. Responsible for energy coupling to the transport system. The protein is Cytochrome c biogenesis ATP-binding export protein CcmA of Pseudomonas syringae pv. syringae (strain B728a).